The chain runs to 1043 residues: Polycomb protein Pcl (1043 aa).

Disordered regions lie at residues 1-34 (MMNN…SAPP), 271-302 (PDST…PLLA), 317-346 (FKTV…AAPS), and 395-422 (KLRK…NTSP). The segment covering 25 to 34 (PSTAVPSAPP) has biased composition (low complexity). Residues 324-344 (PPTPPTPPSPPPPPPAPPVAA) are compositionally biased toward pro residues. Residues 349-404 (VTYALQEDVFIKCNDGRFYLGTIIDQTSDQYLIRFDDQSEQWCEPDKLRKLGGGSS) enclose the Tudor domain. Gly residues predominate over residues 399 to 412 (LGGGSSITAGGGGA). 2 PHD-type zinc fingers span residues 424–472 (GPMC…CAKP) and 512–560 (QIYC…VFCC). Positions 737–757 (AKKQAAQKADKHDELPLKPDL) are enriched in basic and acidic residues. Disordered stretches follow at residues 737–819 (AKKQ…TSSL) and 931–985 (AKDL…PGHS). Residues 783–792 (SRKRKAFRLS) are compositionally biased toward basic residues. Residues 793 to 804 (KRYDNSRNHCDL) are compositionally biased toward basic and acidic residues. 2 positions are modified to phosphoserine: serine 805 and serine 806. Residues 807 to 819 (DENSSSSRGTSSL) show a composition bias toward low complexity. Basic residues predominate over residues 945-954 (THGRLLRQRP). Over residues 955–977 (QKQSPSQSRRNSTSSTATSSSSN) the composition is skewed to low complexity.

The protein belongs to the Polycomblike family. Component of a form of the Esc/E(z) complex present specifically during early embryogenesis which is composed of Caf1-55, esc, E(z), Su(z)12, Pcl and HDAC1/Rpd3. This complex is distinct from the PRC1 complex, which contains many other PcG proteins like Pc, Ph, Psc, Su(z)2. The two complexes however cooperate and interact together during the first 3 hours of development to establish PcG silencing. Interacts with corto in vitro.

It localises to the nucleus. The protein localises to the chromosome. In terms of biological role, polycomb group (PcG) protein. While PcG proteins are generally required to maintain the transcriptionally repressive state of homeotic genes throughout development, this protein is specifically required during the first 6 hours of embryogenesis to establish the repressed state. Component of the Esc/E(z) complex, which methylates 'Lys-9' and 'Lys-27' residues of histone H3, leading to transcriptional repression of the affected target gene. The Esc/E(z) complex is necessary but not sufficient for the repression of homeotic target genes, suggesting that the recruitment of the distinct PRC1 complex is also required. Required for the correct spatial expression of the homeotic genes of the Antennapedia and Bithorax complexes. The sequence is that of Polycomb protein Pcl (Pcl) from Drosophila melanogaster (Fruit fly).